The chain runs to 146 residues: UPF0260 protein Swit_2819 (146 aa).

It belongs to the UPF0260 family.

The chain is UPF0260 protein Swit_2819 from Rhizorhabdus wittichii (strain DSM 6014 / CCUG 31198 / JCM 15750 / NBRC 105917 / EY 4224 / RW1) (Sphingomonas wittichii).